We begin with the raw amino-acid sequence, 273 residues long: MSKLQDVIVQEMKVKKRIDSAEEIMELKQFIKNYVQSHSFIKSLVLGISGGQDSTLVGKLVQMSVNELREEGIDCTFIAVKLPYGVQKDADEVEQALRFIEPDEIVTVNIKPAVDQSVQSLKEAGIVLTDFQKGNEKARERMKVQFSIASNRQGIVVGTDHSAENITGFYTKYGDGAADIAPIFGLNKRQGRQLLAYLGAPKELYEKTPTADLEDDKPQLPDEDALGVTYEAIDNYLEGKPVTPEEQKVIENHYIRNAHKRELAYTRYTWPKS.

Position 47 to 54 (47 to 54) interacts with ATP; it reads GISGGQDS. Mg(2+) is bound at residue Asp-53. A deamido-NAD(+)-binding site is contributed by Arg-139. Thr-159 serves as a coordination point for ATP. Residue Glu-164 coordinates Mg(2+). The deamido-NAD(+) site is built by Lys-172 and Asp-179. ATP contacts are provided by Lys-188 and Thr-210. Deamido-NAD(+) is bound at residue 259–260; sequence HK.

This sequence belongs to the NAD synthetase family. As to quaternary structure, homodimer.

It catalyses the reaction deamido-NAD(+) + NH4(+) + ATP = AMP + diphosphate + NAD(+) + H(+). It participates in cofactor biosynthesis; NAD(+) biosynthesis; NAD(+) from deamido-NAD(+) (ammonia route): step 1/1. Functionally, catalyzes the ATP-dependent amidation of deamido-NAD to form NAD. Uses ammonia as a nitrogen source. This chain is NH(3)-dependent NAD(+) synthetase, found in Staphylococcus aureus (strain COL).